The following is a 229-amino-acid chain: Imidazoleglycerol-phosphate dehydratase (229 aa).

It belongs to the imidazoleglycerol-phosphate dehydratase family.

The enzyme catalyses D-erythro-1-(imidazol-4-yl)glycerol 3-phosphate = 3-(imidazol-4-yl)-2-oxopropyl phosphate + H2O. It functions in the pathway amino-acid biosynthesis; L-histidine biosynthesis; L-histidine from 5-phospho-alpha-D-ribose 1-diphosphate: step 6/9. This Neurospora crassa (strain ATCC 24698 / 74-OR23-1A / CBS 708.71 / DSM 1257 / FGSC 987) protein is Imidazoleglycerol-phosphate dehydratase.